The sequence spans 141 residues: uncharacterized protein (141 aa).

The segment covering 1 to 39 (MNNNNNNNNNNNNNNNNNNNNNNNNNSYDSNHSSSSYTS) has biased composition (low complexity). The segment at 1-48 (MNNNNNNNNNNNNNNNNNNNNNNNNNSYDSNHSSSSYTSENQNREQQF) is disordered. A helical membrane pass occupies residues 109 to 129 (FFCKIILVFICLVAIYSLVVI).

Its subcellular location is the membrane. This is an uncharacterized protein from Dictyostelium discoideum (Social amoeba).